A 295-amino-acid chain; its full sequence is Acetylglutamate kinase (295 aa).

Substrate-binding positions include 66–67 (GG), Arg88, and Asn193.

The protein belongs to the acetylglutamate kinase family. ArgB subfamily.

It localises to the cytoplasm. The catalysed reaction is N-acetyl-L-glutamate + ATP = N-acetyl-L-glutamyl 5-phosphate + ADP. It functions in the pathway amino-acid biosynthesis; L-arginine biosynthesis; N(2)-acetyl-L-ornithine from L-glutamate: step 2/4. Catalyzes the ATP-dependent phosphorylation of N-acetyl-L-glutamate. This chain is Acetylglutamate kinase, found in Bradyrhizobium diazoefficiens (strain JCM 10833 / BCRC 13528 / IAM 13628 / NBRC 14792 / USDA 110).